A 171-amino-acid polypeptide reads, in one-letter code: uncharacterized protein (171 aa).

This is an uncharacterized protein from Caenorhabditis elegans.